The primary structure comprises 159 residues: Eukaryotic translation initiation factor 5A (159 aa).

K51 carries the post-translational modification Hypusine.

This sequence belongs to the eIF-5A family. Post-translationally, lys-51 undergoes hypusination, a unique post-translational modification that consists in the addition of a butylamino group from spermidine to lysine side chain, leading to the formation of the unusual amino acid hypusine. eIF-5As are the only known proteins to undergo this modification, which is essential for their function.

Its subcellular location is the cytoplasm. In terms of biological role, translation factor that promotes translation elongation and termination, particularly upon ribosome stalling at specific amino acid sequence contexts. Binds between the exit (E) and peptidyl (P) site of the ribosome and promotes rescue of stalled ribosome: specifically required for efficient translation of polyproline-containing peptides as well as other motifs that stall the ribosome. Acts as a ribosome quality control (RQC) cofactor by joining the RQC complex to facilitate peptidyl transfer during CAT tailing step. Functions as a regulator of autophagy. In Drosophila melanogaster (Fruit fly), this protein is Eukaryotic translation initiation factor 5A.